The sequence spans 1322 residues: Phosphoribosylformylglycinamidine synthase (1322 aa).

ATP-binding positions include 300 to 311 (GASTGAGGEIRD) and A702. The Mg(2+) site is built by D703, E742, N746, and D915. ATP is bound at residue S917. The region spanning 1073–1322 (VAILREQGIN…LFRNARAWVG (250 aa)) is the Glutamine amidotransferase type-1 domain. C1166 serves as the catalytic Nucleophile. Residues H1287 and E1289 contribute to the active site.

The protein in the N-terminal section; belongs to the FGAMS family. Monomer.

It localises to the cytoplasm. It catalyses the reaction N(2)-formyl-N(1)-(5-phospho-beta-D-ribosyl)glycinamide + L-glutamine + ATP + H2O = 2-formamido-N(1)-(5-O-phospho-beta-D-ribosyl)acetamidine + L-glutamate + ADP + phosphate + H(+). The protein operates within purine metabolism; IMP biosynthesis via de novo pathway; 5-amino-1-(5-phospho-D-ribosyl)imidazole from N(2)-formyl-N(1)-(5-phospho-D-ribosyl)glycinamide: step 1/2. Phosphoribosylformylglycinamidine synthase involved in the purines biosynthetic pathway. Catalyzes the ATP-dependent conversion of formylglycinamide ribonucleotide (FGAR) and glutamine to yield formylglycinamidine ribonucleotide (FGAM) and glutamate. The protein is Phosphoribosylformylglycinamidine synthase of Xylella fastidiosa (strain Temecula1 / ATCC 700964).